The following is a 560-amino-acid chain: Alpha-farnesene synthase (560 aa).

Residues aspartate 308, aspartate 312, and glutamate 462 each coordinate Mg(2+). The DDXXD motif signature appears at 308–312; it reads DDIYD.

The protein belongs to the terpene synthase family. Tpsa subfamily. Mg(2+) is required as a cofactor. In terms of tissue distribution, expressed in the rind tissues of ripe fruits.

The protein localises to the cytoplasm. It catalyses the reaction (2E,6E)-farnesyl diphosphate = (3E,6E)-alpha-farnesene + diphosphate. The protein operates within secondary metabolite biosynthesis; terpenoid biosynthesis. Sesquiterpene synthase producing exclusively alpha-farnesene. Associated with the production of sesquiterpenes responsible for the aroma of the fruit. The sequence is that of Alpha-farnesene synthase from Cucumis melo (Muskmelon).